Reading from the N-terminus, the 105-residue chain is POU domain, class 3, transcription factor 3 (105 aa).

In terms of domain architecture, POU-specific spans 1-49 (QADVGLALGTLYGNVFSQTTICRFEALQLSFKNMCKLKPLLNKWLEEAD). The homeobox DNA-binding region spans 67–105 (KRKKRTSIEVSVKGALESHFLKCPKPAAQEITTLADSLQ).

It belongs to the POU transcription factor family. Class-3 subfamily.

Its subcellular location is the nucleus. The sequence is that of POU domain, class 3, transcription factor 3 (pou3f3) from Xenopus laevis (African clawed frog).